The primary structure comprises 116 residues: Holo-[acyl-carrier-protein] synthase (116 aa).

Mg(2+)-binding residues include Asp5 and Glu50.

This sequence belongs to the P-Pant transferase superfamily. AcpS family. Requires Mg(2+) as cofactor.

It localises to the cytoplasm. It carries out the reaction apo-[ACP] + CoA = holo-[ACP] + adenosine 3',5'-bisphosphate + H(+). In terms of biological role, transfers the 4'-phosphopantetheine moiety from coenzyme A to a Ser of acyl-carrier-protein. The sequence is that of Holo-[acyl-carrier-protein] synthase from Campylobacter lari (strain RM2100 / D67 / ATCC BAA-1060).